Here is a 447-residue protein sequence, read N- to C-terminus: Argininosuccinate lyase (447 aa).

Belongs to the lyase 1 family. Argininosuccinate lyase subfamily.

The protein localises to the cytoplasm. It carries out the reaction 2-(N(omega)-L-arginino)succinate = fumarate + L-arginine. Its pathway is amino-acid biosynthesis; L-arginine biosynthesis; L-arginine from L-ornithine and carbamoyl phosphate: step 3/3. The polypeptide is Argininosuccinate lyase (Bacteroides fragilis (strain ATCC 25285 / DSM 2151 / CCUG 4856 / JCM 11019 / LMG 10263 / NCTC 9343 / Onslow / VPI 2553 / EN-2)).